A 562-amino-acid polypeptide reads, in one-letter code: Endochitinase (562 aa).

A signal peptide spans 1–20; it reads MSLLYIILLFTQFLLLPTDA. The 285-residue stretch at 27–311 folds into the GH18 domain; sequence TNIAVYWGQN…EILKNLLTSA (285 aa). Glu157 serves as the catalytic Proton donor. 2 disordered regions span residues 329-358 and 461-484; these read TSSA…SKVT and TLSP…SDST. Residues 481 to 562 are chitin-binding, high affinity; it reads SDSTARTLAK…NFSYLESNYF (82 aa). Asn553 carries an N-linked (GlcNAc...) asparagine glycan.

It belongs to the glycosyl hydrolase 18 family. Chitinase class V subfamily. Post-translationally, extensively glycosylated with a series of short O-linked mannose oligosaccharides ranging in size from Man(2) to Man(5).

It localises to the secreted. Its subcellular location is the cell wall. The catalysed reaction is Random endo-hydrolysis of N-acetyl-beta-D-glucosaminide (1-&gt;4)-beta-linkages in chitin and chitodextrins.. Chitinase is required for cell separation during growth of S.cerevisiae. The chain is Endochitinase (CTS1) from Saccharomyces cerevisiae (strain ATCC 204508 / S288c) (Baker's yeast).